The sequence spans 325 residues: Ribose-phosphate pyrophosphokinase 4 (325 aa).

2 residues coordinate Mg(2+): aspartate 145 and histidine 147. The segment at 228-243 is binding of phosphoribosylpyrophosphate; sequence GRHVVIVDDLVQSGGT.

The protein belongs to the ribose-phosphate pyrophosphokinase family. The cofactor is Mg(2+).

The enzyme catalyses D-ribose 5-phosphate + ATP = 5-phospho-alpha-D-ribose 1-diphosphate + AMP + H(+). In Oryza sativa subsp. japonica (Rice), this protein is Ribose-phosphate pyrophosphokinase 4.